A 467-amino-acid chain; its full sequence is MSGKVVQIIGPVLDIEFPSGQLPKLLNAIVVRDGEKSVTCEVQQLLGDNRVRAIAMSSTDGLRRGIQAEDTGAPISVPVGKVTLGRIFNVLGDCVDNLGTVTRQAVQPIHKQAPSFVQLETKPSVFETGIKVVDLLAPYRRGGKIGLFGGAGVGKTVLIMELINNIAKAHGGVSVFAGVGERTREGNDLYEEMKASGVIQSQNLSESKVALCYGQMNEPPGARMRVGLTALTMAEHFRDINKQDVLLFIDNIFRFVQAGSEVSALLGRMPSAVGYQPTLATEMGALQERITSTVDGSITSIQAVYVPADDLTDPAPATTFAHLDATTVLSRGLAAKGIYPAVDPLDSTSTMLQPNIVGEAHYQTASRVKQTLQRYKELQDIIAILGLDELSEEDRLLVARARKIERFLSQPFFVAEVFTGSPGKYVSLEESIKGFKMILDGELDDLPEQAFYLVGNIEEAIQKAQKL.

149 to 156 contacts ATP; the sequence is GGAGVGKT.

Belongs to the ATPase alpha/beta chains family. As to quaternary structure, F-type ATPases have 2 components, CF(1) - the catalytic core - and CF(0) - the membrane proton channel. CF(1) has five subunits: alpha(3), beta(3), gamma(1), delta(1), epsilon(1). CF(0) has four main subunits: a(1), b(1), b'(1) and c(9-12).

It is found in the plastid. It localises to the chloroplast thylakoid membrane. The catalysed reaction is ATP + H2O + 4 H(+)(in) = ADP + phosphate + 5 H(+)(out). Its function is as follows. Produces ATP from ADP in the presence of a proton gradient across the membrane. The catalytic sites are hosted primarily by the beta subunits. The sequence is that of ATP synthase subunit beta, chloroplastic from Cyanidioschyzon merolae (strain NIES-3377 / 10D) (Unicellular red alga).